The primary structure comprises 45 residues: Large ribosomal subunit protein bL36 (45 aa).

The tract at residues 1–45 (MRVSSSIKADPSKGDKLVRRKGRLYVINKKDPNRKQRQAGPARKK) is disordered.

Belongs to the bacterial ribosomal protein bL36 family.

The polypeptide is Large ribosomal subunit protein bL36 (Chlamydia trachomatis serovar L2 (strain ATCC VR-902B / DSM 19102 / 434/Bu)).